The primary structure comprises 565 residues: Heme/hemopexin transporter protein HuxB (565 aa).

The signal sequence occupies residues 1–26 (MKMRPRYSVIASAVSLGFVLSKSVMA). The POTRA domain occupies 73–150 (FPLTQVQILD…GTVKILLLKG (78 aa)).

Belongs to the TPS (TC 1.B.20) family.

The protein resides in the cell outer membrane. In terms of biological role, likely functions in the release of soluble HxuA from the cell. Probable member of a two partner secretion pathway (TPS) in which it mediates the secretion of HuxA. The chain is Heme/hemopexin transporter protein HuxB (hxuB) from Haemophilus influenzae (strain 86-028NP).